Reading from the N-terminus, the 383-residue chain is Putative transcription factor 282R (383 aa).

Belongs to the IIV-6 282R family.

Transcription activation. This is Putative transcription factor 282R from Acheta domesticus (House cricket).